We begin with the raw amino-acid sequence, 390 residues long: Elongation factor Tu 2 (390 aa).

The tr-type G domain maps to 10–201 (KPHVNVGTIG…LDEYVAVPPR (192 aa)). The segment at 19–26 (GHVDHGKT) is G1. A GTP-binding site is contributed by 19 to 26 (GHVDHGKT). Residue Thr26 participates in Mg(2+) binding. The tract at residues 55 to 59 (GITIA) is G2. The interval 76 to 79 (DCPG) is G3. GTP-binding positions include 76 to 80 (DCPGH) and 131 to 134 (NKAD). Positions 131–134 (NKAD) are G4. The interval 168–170 (SAL) is G5.

Belongs to the TRAFAC class translation factor GTPase superfamily. Classic translation factor GTPase family. EF-Tu/EF-1A subfamily. In terms of assembly, monomer.

The protein localises to the cytoplasm. The enzyme catalyses GTP + H2O = GDP + phosphate + H(+). GTP hydrolase that promotes the GTP-dependent binding of aminoacyl-tRNA to the A-site of ribosomes during protein biosynthesis. In Wolbachia pipientis wMel, this protein is Elongation factor Tu 2.